The primary structure comprises 145 residues: D-aminoacyl-tRNA deacylase (145 aa).

The Gly-cisPro motif, important for rejection of L-amino acids signature appears at 137 to 138 (GP).

Belongs to the DTD family. In terms of assembly, homodimer.

Its subcellular location is the cytoplasm. It catalyses the reaction glycyl-tRNA(Ala) + H2O = tRNA(Ala) + glycine + H(+). It carries out the reaction a D-aminoacyl-tRNA + H2O = a tRNA + a D-alpha-amino acid + H(+). In terms of biological role, an aminoacyl-tRNA editing enzyme that deacylates mischarged D-aminoacyl-tRNAs. Also deacylates mischarged glycyl-tRNA(Ala), protecting cells against glycine mischarging by AlaRS. Acts via tRNA-based rather than protein-based catalysis; rejects L-amino acids rather than detecting D-amino acids in the active site. By recycling D-aminoacyl-tRNA to D-amino acids and free tRNA molecules, this enzyme counteracts the toxicity associated with the formation of D-aminoacyl-tRNA entities in vivo and helps enforce protein L-homochirality. The sequence is that of D-aminoacyl-tRNA deacylase from Limosilactobacillus fermentum (strain NBRC 3956 / LMG 18251) (Lactobacillus fermentum).